A 95-amino-acid chain; its full sequence is Large ribosomal subunit protein uL23 (95 aa).

It belongs to the universal ribosomal protein uL23 family. As to quaternary structure, part of the 50S ribosomal subunit. Contacts protein L29, and trigger factor when it is bound to the ribosome.

Functionally, one of the early assembly proteins it binds 23S rRNA. One of the proteins that surrounds the polypeptide exit tunnel on the outside of the ribosome. Forms the main docking site for trigger factor binding to the ribosome. The chain is Large ribosomal subunit protein uL23 from Desulfatibacillum aliphaticivorans.